Here is a 682-residue protein sequence, read N- to C-terminus: Glutamine--fructose-6-phosphate aminotransferase [isomerizing] 2 (682 aa).

Cys2 acts as the For GATase activity in catalysis. A Glutamine amidotransferase type-2 domain is found at 2 to 288 (CGIFAYMNYR…DDDIAAVADG (287 aa)). Position 244 is a phosphoserine (Ser244). 2 SIS domains span residues 360–499 (HLKE…DRIS) and 531–672 (LALE…VDFP). Residues 377 to 378 (TS), 422 to 424 (SQS), Thr427, and His578 contribute to the substrate site.

It carries out the reaction D-fructose 6-phosphate + L-glutamine = D-glucosamine 6-phosphate + L-glutamate. Its pathway is nucleotide-sugar biosynthesis; UDP-N-acetyl-alpha-D-glucosamine biosynthesis; alpha-D-glucosamine 6-phosphate from D-fructose 6-phosphate: step 1/1. Functionally, controls the flux of glucose into the hexosamine pathway. Most likely involved in regulating the availability of precursors for N- and O-linked glycosylation of proteins. In Mus musculus (Mouse), this protein is Glutamine--fructose-6-phosphate aminotransferase [isomerizing] 2 (Gfpt2).